The primary structure comprises 543 residues: Tubby-related protein 1 (543 aa).

The disordered stretch occupies residues methionine 1–glycine 290. Basic and acidic residues-rich tracts occupy residues proline 46–proline 56 and phenylalanine 86–glutamate 99. Composition is skewed to acidic residues over residues glycine 110 to glutamate 132 and lysine 244 to valine 255. The segment covering glycine 267–lysine 276 has biased composition (basic residues).

It belongs to the TUB family. As to quaternary structure, homodimer. May interact with ABCF1, PSIP1, ZEB1 and HMGB2 (Potential). Interacts with F-actin. Interacts with DNM1. Interacts with TUB. Interacts with TYRO3. Retina specific. Detected in the outer plexiform layer in photoreceptor cells (at protein level).

Its subcellular location is the cytoplasm. The protein localises to the cell membrane. It localises to the secreted. It is found in the synapse. Functionally, required for normal development of photoreceptor synapses. Required for normal photoreceptor function and for long-term survival of photoreceptor cells. Interacts with cytoskeleton proteins and may play a role in protein transport in photoreceptor cells. Binds lipids, especially phosphatidylinositol 3-phosphate, phosphatidylinositol 4-phosphate, phosphatidylinositol 5-phosphate, phosphatidylinositol 3,4-bisphosphate, phosphatidylinositol 4,5-bisphosphate, phosphatidylinositol 3,4,5-bisphosphate, phosphatidylserine and phosphatidic acid (in vitro). Contribute to stimulation of phagocytosis of apoptotic retinal pigment epithelium (RPE) cells and macrophages. This chain is Tubby-related protein 1 (Tulp1), found in Mus musculus (Mouse).